The chain runs to 310 residues: GMP synthase [glutamine-hydrolyzing] subunit B (310 aa).

Positions 2 to 185 (FDPKKFIDEA…LGLPDSIVYR (184 aa)) constitute a GMPS ATP-PPase domain. 29–35 (SGGVDSS) provides a ligand contact to ATP.

As to quaternary structure, heterodimer composed of a glutamine amidotransferase subunit (A) and a GMP-binding subunit (B).

It carries out the reaction XMP + L-glutamine + ATP + H2O = GMP + L-glutamate + AMP + diphosphate + 2 H(+). Its pathway is purine metabolism; GMP biosynthesis; GMP from XMP (L-Gln route): step 1/1. Catalyzes the synthesis of GMP from XMP. The polypeptide is GMP synthase [glutamine-hydrolyzing] subunit B (guaAB) (Methanocaldococcus jannaschii (strain ATCC 43067 / DSM 2661 / JAL-1 / JCM 10045 / NBRC 100440) (Methanococcus jannaschii)).